Consider the following 1119-residue polypeptide: Protein translocase subunit SecA (1119 aa).

ATP contacts are provided by residues Gln-177, 195–199 (GEGKT), and Asp-692. A disordered region spans residues 1025–1081 (APSIHEARQTKSKEKVETRKEEIPNMDERAAQSRAAGNTQRQQPEVTETIVRDRPKI). Residues 1029–1055 (HEARQTKSKEKVETRKEEIPNMDERAA) show a composition bias toward basic and acidic residues. A compositionally biased stretch (polar residues) spans 1059-1070 (AAGNTQRQQPEV).

The protein belongs to the SecA family. In terms of assembly, monomer and homodimer. Part of the essential Sec protein translocation apparatus which comprises SecA, SecYEG and auxiliary proteins SecDF. Other proteins may also be involved.

Its subcellular location is the cell inner membrane. The protein resides in the cytoplasm. The catalysed reaction is ATP + H2O + cellular proteinSide 1 = ADP + phosphate + cellular proteinSide 2.. Part of the Sec protein translocase complex. Interacts with the SecYEG preprotein conducting channel. Has a central role in coupling the hydrolysis of ATP to the transfer of proteins into and across the cell membrane, serving as an ATP-driven molecular motor driving the stepwise translocation of polypeptide chains across the membrane. The protein is Protein translocase subunit SecA of Christiangramia forsetii (strain DSM 17595 / CGMCC 1.15422 / KT0803) (Gramella forsetii).